Consider the following 860-residue polypeptide: Leucine--tRNA ligase (860 aa).

Residues 42–52 (PYPSGRLHMGH) carry the 'HIGH' region motif. The 'KMSKS' region signature appears at 619–623 (KMSKS). Lys622 contacts ATP.

It belongs to the class-I aminoacyl-tRNA synthetase family.

It is found in the cytoplasm. It carries out the reaction tRNA(Leu) + L-leucine + ATP = L-leucyl-tRNA(Leu) + AMP + diphosphate. The chain is Leucine--tRNA ligase from Citrobacter koseri (strain ATCC BAA-895 / CDC 4225-83 / SGSC4696).